The chain runs to 466 residues: Methylenetetrahydrofolate--tRNA-(uracil-5-)-methyltransferase TrmFO (466 aa).

12–17 (GAGLAG) is a binding site for FAD.

This sequence belongs to the MnmG family. TrmFO subfamily. FAD is required as a cofactor.

The protein localises to the cytoplasm. The enzyme catalyses uridine(54) in tRNA + (6R)-5,10-methylene-5,6,7,8-tetrahydrofolate + NADH + H(+) = 5-methyluridine(54) in tRNA + (6S)-5,6,7,8-tetrahydrofolate + NAD(+). It carries out the reaction uridine(54) in tRNA + (6R)-5,10-methylene-5,6,7,8-tetrahydrofolate + NADPH + H(+) = 5-methyluridine(54) in tRNA + (6S)-5,6,7,8-tetrahydrofolate + NADP(+). Its function is as follows. Catalyzes the folate-dependent formation of 5-methyl-uridine at position 54 (M-5-U54) in all tRNAs. This chain is Methylenetetrahydrofolate--tRNA-(uracil-5-)-methyltransferase TrmFO, found in Synechococcus elongatus (strain ATCC 33912 / PCC 7942 / FACHB-805) (Anacystis nidulans R2).